A 450-amino-acid polypeptide reads, in one-letter code: Adenylosuccinate lyase (450 aa).

Residues 9–10, 75–77, and 101–102 each bind N(6)-(1,2-dicarboxyethyl)-AMP; these read RY, HHD, and TS. Catalysis depends on His-149, which acts as the Proton donor/acceptor. Residue Gln-223 participates in N(6)-(1,2-dicarboxyethyl)-AMP binding. Residue Ser-273 is the Proton donor/acceptor of the active site. Residues Ser-274, 279–281, and 318–322 each bind N(6)-(1,2-dicarboxyethyl)-AMP; these read KRN and SVERV.

This sequence belongs to the lyase 1 family. Adenylosuccinate lyase subfamily. In terms of assembly, homotetramer. Residues from neighboring subunits contribute catalytic and substrate-binding residues to each active site.

It carries out the reaction N(6)-(1,2-dicarboxyethyl)-AMP = fumarate + AMP. It catalyses the reaction (2S)-2-[5-amino-1-(5-phospho-beta-D-ribosyl)imidazole-4-carboxamido]succinate = 5-amino-1-(5-phospho-beta-D-ribosyl)imidazole-4-carboxamide + fumarate. It functions in the pathway purine metabolism; AMP biosynthesis via de novo pathway; AMP from IMP: step 2/2. It participates in purine metabolism; IMP biosynthesis via de novo pathway; 5-amino-1-(5-phospho-D-ribosyl)imidazole-4-carboxamide from 5-amino-1-(5-phospho-D-ribosyl)imidazole-4-carboxylate: step 2/2. Functionally, catalyzes two reactions in de novo purine nucleotide biosynthesis. Catalyzes the breakdown of 5-aminoimidazole- (N-succinylocarboxamide) ribotide (SAICAR or 2-[5-amino-1-(5-phospho-beta-D-ribosyl)imidazole-4-carboxamido]succinate) to 5-aminoimidazole-4-carboxamide ribotide (AICAR or 5-amino-1-(5-phospho-beta-D-ribosyl)imidazole-4-carboxamide) and fumarate, and of adenylosuccinate (ADS or N(6)-(1,2-dicarboxyethyl)-AMP) to adenosine monophosphate (AMP) and fumarate. This Pyrococcus horikoshii (strain ATCC 700860 / DSM 12428 / JCM 9974 / NBRC 100139 / OT-3) protein is Adenylosuccinate lyase (purB).